A 149-amino-acid polypeptide reads, in one-letter code: D-aminoacyl-tRNA deacylase (149 aa).

Positions 137–138 (GP) match the Gly-cisPro motif, important for rejection of L-amino acids motif.

It belongs to the DTD family. In terms of assembly, homodimer.

The protein localises to the cytoplasm. The catalysed reaction is glycyl-tRNA(Ala) + H2O = tRNA(Ala) + glycine + H(+). The enzyme catalyses a D-aminoacyl-tRNA + H2O = a tRNA + a D-alpha-amino acid + H(+). In terms of biological role, an aminoacyl-tRNA editing enzyme that deacylates mischarged D-aminoacyl-tRNAs. Also deacylates mischarged glycyl-tRNA(Ala), protecting cells against glycine mischarging by AlaRS. Acts via tRNA-based rather than protein-based catalysis; rejects L-amino acids rather than detecting D-amino acids in the active site. By recycling D-aminoacyl-tRNA to D-amino acids and free tRNA molecules, this enzyme counteracts the toxicity associated with the formation of D-aminoacyl-tRNA entities in vivo and helps enforce protein L-homochirality. The protein is D-aminoacyl-tRNA deacylase of Caldicellulosiruptor saccharolyticus (strain ATCC 43494 / DSM 8903 / Tp8T 6331).